Consider the following 336-residue polypeptide: Holliday junction branch migration complex subunit RuvB (336 aa).

Residues 1–181 form a large ATPase domain (RuvB-L) region; sequence MDRIVEIEKV…FGMDFRLQFY (181 aa). ATP is bound by residues L20, R21, G62, K65, T66, T67, 128–130, R171, Y181, and R218; that span reads EDF. Residue T66 coordinates Mg(2+). Residues 182–252 are small ATPAse domain (RuvB-S); it reads TSSELSRIVQ…RAKEGLNALG (71 aa). The interval 255–336 is head domain (RuvB-H); the sequence is SLGFDEMDIR…KIDIEKGLFE (82 aa). The DNA site is built by R309 and R314.

Belongs to the RuvB family. In terms of assembly, homohexamer. Forms an RuvA(8)-RuvB(12)-Holliday junction (HJ) complex. HJ DNA is sandwiched between 2 RuvA tetramers; dsDNA enters through RuvA and exits via RuvB. An RuvB hexamer assembles on each DNA strand where it exits the tetramer. Each RuvB hexamer is contacted by two RuvA subunits (via domain III) on 2 adjacent RuvB subunits; this complex drives branch migration. In the full resolvosome a probable DNA-RuvA(4)-RuvB(12)-RuvC(2) complex forms which resolves the HJ.

It is found in the cytoplasm. It catalyses the reaction ATP + H2O = ADP + phosphate + H(+). In terms of biological role, the RuvA-RuvB-RuvC complex processes Holliday junction (HJ) DNA during genetic recombination and DNA repair, while the RuvA-RuvB complex plays an important role in the rescue of blocked DNA replication forks via replication fork reversal (RFR). RuvA specifically binds to HJ cruciform DNA, conferring on it an open structure. The RuvB hexamer acts as an ATP-dependent pump, pulling dsDNA into and through the RuvAB complex. RuvB forms 2 homohexamers on either side of HJ DNA bound by 1 or 2 RuvA tetramers; 4 subunits per hexamer contact DNA at a time. Coordinated motions by a converter formed by DNA-disengaged RuvB subunits stimulates ATP hydrolysis and nucleotide exchange. Immobilization of the converter enables RuvB to convert the ATP-contained energy into a lever motion, pulling 2 nucleotides of DNA out of the RuvA tetramer per ATP hydrolyzed, thus driving DNA branch migration. The RuvB motors rotate together with the DNA substrate, which together with the progressing nucleotide cycle form the mechanistic basis for DNA recombination by continuous HJ branch migration. Branch migration allows RuvC to scan DNA until it finds its consensus sequence, where it cleaves and resolves cruciform DNA. The chain is Holliday junction branch migration complex subunit RuvB from Campylobacter concisus (strain 13826).